We begin with the raw amino-acid sequence, 285 residues long: Putative sugar uptake protein lin0444 (285 aa).

The next 9 helical transmembrane spans lie at Ser2–Ala21, Gln31–Leu50, Thr55–Phe77, Trp111–Met133, Ser146–Thr168, Phe172–Ile194, Val207–Ala229, Val233–Phe255, and Leu262–Leu284.

The protein belongs to the GRP transporter (TC 2.A.7.5) family.

The protein resides in the cell membrane. The polypeptide is Putative sugar uptake protein lin0444 (Listeria innocua serovar 6a (strain ATCC BAA-680 / CLIP 11262)).